The chain runs to 440 residues: uncharacterized protein (440 aa).

Residues 1 to 17 form the signal peptide; it reads MDRFFCTVWVWSVLFGA. C18 carries the N-palmitoyl cysteine lipid modification. The S-diacylglycerol cysteine moiety is linked to residue C18. A disordered region spans residues 241-268; it reads SALQERPSSPEPVVSTIPSPEGEENSAA.

The protein resides in the cell membrane. This is an uncharacterized protein from Treponema pallidum (strain Nichols).